A 150-amino-acid polypeptide reads, in one-letter code: Anthranilate synthase component 1 (150 aa).

L-tryptophan is bound at residue S40. R119 contributes to the chorismate binding site.

Belongs to the anthranilate synthase component I family. In terms of assembly, heterotetramer consisting of two non-identical subunits: a beta subunit (TrpG) and a large alpha subunit (TrpE). Mg(2+) serves as cofactor.

It carries out the reaction chorismate + L-glutamine = anthranilate + pyruvate + L-glutamate + H(+). It functions in the pathway amino-acid biosynthesis; L-tryptophan biosynthesis; L-tryptophan from chorismate: step 1/5. Feedback inhibited by tryptophan. Functionally, part of a heterotetrameric complex that catalyzes the two-step biosynthesis of anthranilate, an intermediate in the biosynthesis of L-tryptophan. In the first step, the glutamine-binding beta subunit (TrpG) of anthranilate synthase (AS) provides the glutamine amidotransferase activity which generates ammonia as a substrate that, along with chorismate, is used in the second step, catalyzed by the large alpha subunit of AS (TrpE) to produce anthranilate. In the absence of TrpG, TrpE can synthesize anthranilate directly from chorismate and high concentrations of ammonia. The sequence is that of Anthranilate synthase component 1 (trpE) from Citrobacter freundii.